A 301-amino-acid chain; its full sequence is Aquaporin-10 (301 aa).

Residues 1-22 are Cytoplasmic-facing; the sequence is MVFTQAPAEIMGHLRIRSLLAR. Residues 23–41 traverse the membrane as a helical segment; that stretch reads QCLAEFLGVFVLMLLTQGA. At 42 to 55 the chain is on the extracellular side; the sequence is VAQAVTSGETKGNF. The helical transmembrane segment at 56–75 threads the bilayer; sequence FTMFLAGSLAVTIAIYVGGN. At 76–77 the chain is on the cytoplasmic side; the sequence is VS. The discontinuously helical intramembrane region spans 78–90; it reads GAHLNPAFSLAMC. Positions 82–84 match the NPA 1 motif; it reads NPA. Over 91–96 the chain is Cytoplasmic; sequence IVGRLP. The helical transmembrane segment at 97–121 threads the bilayer; it reads WVKLPIYILVQLLSAFCASGATYVL. Residues 122–158 are Extracellular-facing; the sequence is YHDALQNYTGGNLTVTGPKETASIFATYPAPYLSLNN. Asn-128 and Asn-133 each carry an N-linked (GlcNAc...) asparagine glycan. Residues 159 to 176 traverse the membrane as a helical segment; it reads GFLDQVLGTGMLIVGLLA. The Cytoplasmic segment spans residues 177–188; it reads ILDRRNKGVPAG. The chain crosses the membrane as a helical span at residues 189 to 205; it reads LEPVVVGMLILALGLSM. Topologically, residues 206–208 are extracellular; the sequence is GAN. An intramembrane region (discontinuously helical) is located at residues 209–223; the sequence is CGIPLNPARDLGPRL. Positions 214–216 match the NPA 2 motif; it reads NPA. Residues 224 to 241 lie on the Extracellular side of the membrane; the sequence is FTYVAGWGPEVFSAGNGW. The helical transmembrane segment at 242 to 262 threads the bilayer; that stretch reads WWVPVVAPLVGATVGTATYQL. At 263–301 the chain is on the cytoplasmic side; it reads LVALHHPEGPEPAQDLVSAQHKASELETPASAQMLECKL.

It belongs to the MIP/aquaporin (TC 1.A.8) family. As to quaternary structure, homotetramer; each monomer provides an independent glycerol/water pore. In terms of processing, N-glycosylation at Asn-133 increases the stability of the protein but has no effect on its activity. In terms of tissue distribution, detected in epithelial cells on villi in the ileum, and also in stomach, jejunum, colon, rectum, white adipose tissue and placenta (at protein level). Expressed in duodenum and jejunum. Highest expression in absorptive epithelial cells at the tips of villi in the jejunum. Detected in subcutaneous adipose tissue.

The protein resides in the apical cell membrane. It localises to the cell membrane. It is found in the lipid droplet. It carries out the reaction glycerol(in) = glycerol(out). The enzyme catalyses H2O(in) = H2O(out). The catalysed reaction is urea(in) = urea(out). Its activity is regulated as follows. Glycerol transport is regulated by pH, with the porin being permeable to glycerol at pH 5.5 but not at pH 7.4. Water permeability, however, is not influenced by pH. Its function is as follows. Aquaglyceroporins form homotetrameric transmembrane channels, with each monomer independently mediating glycerol and water transport across the plasma membrane along their osmotic gradient. Could also be permeable to urea. Among aquaglyceroporins, it exhibits a unique pH-gated glycerol transport activity, being more active at acidic pH. It most likely plays a central role in the efflux of glycerol formed during triglyceride hydrolysis in adipocytes and in glycerol uptake by enterocytes, as both processes occur and are stimulated at acidic pH. The sequence is that of Aquaporin-10 from Homo sapiens (Human).